Consider the following 183-residue polypeptide: UPF0725 protein At4g11700 (183 aa).

Belongs to the UPF0725 (EMB2204) family.

The sequence is that of UPF0725 protein At4g11700 from Arabidopsis thaliana (Mouse-ear cress).